The sequence spans 637 residues: Phospholipase B (637 aa).

A signal peptide spans 1-19 (MSIATATFAFSLFATIAFA). A PLA2c domain is found at 46 to 572 (DCPSNVTWIR…DTWCWAGDDN (527 aa)). N-linked (GlcNAc...) asparagine glycans are attached at residues Asn-50, Asn-56, Asn-122, Asn-231, Asn-246, Asn-272, Asn-314, Asn-343, Asn-387, Asn-433, Asn-481, Asn-501, Asn-528, Asn-553, Asn-572, Asn-594, and Asn-606.

The protein belongs to the lysophospholipase family. Post-translationally, N-glycosylated.

The protein resides in the secreted. The protein localises to the cell membrane. The catalysed reaction is a 1-acyl-sn-glycero-3-phosphocholine + H2O = sn-glycerol 3-phosphocholine + a fatty acid + H(+). With respect to regulation, inhibited by Fe(3+) ion. Functionally, exhibits phospholipase B (PLB), lysophospholipase (LPL) and lysophospholipase/transacylase (LPTA) activities. The sequence is that of Phospholipase B (PLB1) from Cryptococcus neoformans var. grubii serotype A (strain H99 / ATCC 208821 / CBS 10515 / FGSC 9487) (Filobasidiella neoformans var. grubii).